A 69-amino-acid polypeptide reads, in one-letter code: DNA gyrase inhibitor YacG (69 aa).

4 residues coordinate Zn(2+): cysteine 7, cysteine 10, cysteine 26, and cysteine 30.

Belongs to the DNA gyrase inhibitor YacG family. In terms of assembly, interacts with GyrB. Zn(2+) is required as a cofactor.

In terms of biological role, inhibits all the catalytic activities of DNA gyrase by preventing its interaction with DNA. Acts by binding directly to the C-terminal domain of GyrB, which probably disrupts DNA binding by the gyrase. The sequence is that of DNA gyrase inhibitor YacG from Shewanella baltica (strain OS195).